The sequence spans 141 residues: Large ribosomal subunit protein uL11 (141 aa).

It belongs to the universal ribosomal protein uL11 family. As to quaternary structure, part of the ribosomal stalk of the 50S ribosomal subunit. Interacts with L10 and the large rRNA to form the base of the stalk. L10 forms an elongated spine to which L12 dimers bind in a sequential fashion forming a multimeric L10(L12)X complex. One or more lysine residues are methylated.

Its function is as follows. Forms part of the ribosomal stalk which helps the ribosome interact with GTP-bound translation factors. This chain is Large ribosomal subunit protein uL11, found in Thermosipho africanus (strain TCF52B).